The following is a 240-amino-acid chain: 2,3,4,5-tetrahydropyridine-2,6-dicarboxylate N-acetyltransferase (240 aa).

This sequence belongs to the transferase hexapeptide repeat family. DapH subfamily.

It carries out the reaction (S)-2,3,4,5-tetrahydrodipicolinate + acetyl-CoA + H2O = L-2-acetamido-6-oxoheptanedioate + CoA. It functions in the pathway amino-acid biosynthesis; L-lysine biosynthesis via DAP pathway; LL-2,6-diaminopimelate from (S)-tetrahydrodipicolinate (acetylase route): step 1/3. Its function is as follows. Catalyzes the transfer of an acetyl group from acetyl-CoA to tetrahydrodipicolinate. This is 2,3,4,5-tetrahydropyridine-2,6-dicarboxylate N-acetyltransferase from Bacillus cereus (strain G9842).